We begin with the raw amino-acid sequence, 294 residues long: Small ribosomal subunit protein uS3 (294 aa).

A KH type-2 domain is found at 39 to 107; that stretch reads VREYLKTKLK…PVAVNIEEVR (69 aa). Positions 210 to 294 are disordered; it reads RNDLPAVETP…AAPAADVKGE (85 aa). Residues 219–238 show a composition bias toward basic and acidic residues; it reads PRPDEERRPRGPRRDGRPGG. Composition is skewed to low complexity over residues 249–258 and 281–294; these read RPAAGNSAPA and VAAPAAPAADVKGE.

It belongs to the universal ribosomal protein uS3 family. In terms of assembly, part of the 30S ribosomal subunit. Forms a tight complex with proteins S10 and S14.

Its function is as follows. Binds the lower part of the 30S subunit head. Binds mRNA in the 70S ribosome, positioning it for translation. In Verminephrobacter eiseniae (strain EF01-2), this protein is Small ribosomal subunit protein uS3.